Here is a 211-residue protein sequence, read N- to C-terminus: Prolactin-3C1 (211 aa).

Positions 1–29 are cleaved as a signal peptide; the sequence is MQLSLTQARTWKGLLLLVSCMILWISVTP. N-linked (GlcNAc...) asparagine glycans are attached at residues asparagine 77 and asparagine 173. Cysteine 80 and cysteine 187 are disulfide-bonded.

Belongs to the somatotropin/prolactin family. In terms of tissue distribution, expressed exclusively in decidual tissue.

The protein resides in the secreted. The chain is Prolactin-3C1 (Prl3c1) from Rattus norvegicus (Rat).